Reading from the N-terminus, the 1343-residue chain is DNA-directed RNA polymerase subunit beta (1343 aa).

It belongs to the RNA polymerase beta chain family. As to quaternary structure, the RNAP catalytic core consists of 2 alpha, 1 beta, 1 beta' and 1 omega subunit. When a sigma factor is associated with the core the holoenzyme is formed, which can initiate transcription.

It catalyses the reaction RNA(n) + a ribonucleoside 5'-triphosphate = RNA(n+1) + diphosphate. Its function is as follows. DNA-dependent RNA polymerase catalyzes the transcription of DNA into RNA using the four ribonucleoside triphosphates as substrates. The polypeptide is DNA-directed RNA polymerase subunit beta (Shewanella violacea).